The chain runs to 156 residues: Transcriptional repressor NrdR (156 aa).

A zinc finger spans residues 3–34 (CPKCNSTQSKVVDSRHADELNAIRRRRECENC). The region spanning 49 to 139 (LIVVKKDGTR…VYKEFKDVDQ (91 aa)) is the ATP-cone domain.

It belongs to the NrdR family. Requires Zn(2+) as cofactor.

Negatively regulates transcription of bacterial ribonucleotide reductase nrd genes and operons by binding to NrdR-boxes. The chain is Transcriptional repressor NrdR from Staphylococcus aureus (strain NCTC 8325 / PS 47).